The chain runs to 478 residues: Cytochrome c-552 (478 aa).

The first 26 residues, 1 to 26 (MARKTLRARRFFSLIFPFFFITSVYA), serve as a signal peptide directing secretion. Position 94 (H94) interacts with heme c. The heme site is built by C122, C125, and K126. Heme c-binding residues include C160, C163, H164, C209, C212, and H213. 4 residues coordinate Ca(2+): E215, Y216, K261, and Q263. Y216 contributes to the substrate binding site. H264 contacts substrate. Heme c-binding residues include H275, C282, C285, H286, H301, C314, C317, H318, and H393.

This sequence belongs to the cytochrome c-552 family. The cofactor is Ca(2+). Heme c serves as cofactor.

Its subcellular location is the periplasm. The enzyme catalyses 6 Fe(III)-[cytochrome c] + NH4(+) + 2 H2O = 6 Fe(II)-[cytochrome c] + nitrite + 8 H(+). It functions in the pathway nitrogen metabolism; nitrate reduction (assimilation). Catalyzes the reduction of nitrite to ammonia, consuming six electrons in the process. The chain is Cytochrome c-552 from Salmonella paratyphi C (strain RKS4594).